Reading from the N-terminus, the 340-residue chain is Probable complex I intermediate-associated protein 30, mitochondrial (340 aa).

Belongs to the CIA30 family.

It localises to the mitochondrion. Chaperone protein involved in the assembly of the mitochondrial NADH:ubiquinone oxidoreductase complex (complex I). Required for normal growth and reproduction. The chain is Probable complex I intermediate-associated protein 30, mitochondrial (nuaf-1) from Caenorhabditis briggsae.